A 235-amino-acid polypeptide reads, in one-letter code: MTELARLKFYATQPHSCSYLPEEQATTLFLDPSQPMDVHVYADLSEMGFRRSGDHLYRPHCQNCNACVPARIPAARFIPNRQQRRILKRNADLTVTAARPAFKEEYFELYRRYIETRHADGDMYPPSRDQFSTFLVRDLPFCWFYEFRLEGRLMAVAVCDLLPNGLSAVYTFYEPDEERRSLGRFAILWQITEALRQNLEAVYLGYWIKNCKKMNYKTQYRPIELLINQRWVTLN.

The protein belongs to the R-transferase family. Bpt subfamily.

The protein resides in the cytoplasm. The enzyme catalyses N-terminal L-glutamyl-[protein] + L-leucyl-tRNA(Leu) = N-terminal L-leucyl-L-glutamyl-[protein] + tRNA(Leu) + H(+). It catalyses the reaction N-terminal L-aspartyl-[protein] + L-leucyl-tRNA(Leu) = N-terminal L-leucyl-L-aspartyl-[protein] + tRNA(Leu) + H(+). Its function is as follows. Functions in the N-end rule pathway of protein degradation where it conjugates Leu from its aminoacyl-tRNA to the N-termini of proteins containing an N-terminal aspartate or glutamate. This is Aspartate/glutamate leucyltransferase from Pseudomonas putida (strain ATCC 47054 / DSM 6125 / CFBP 8728 / NCIMB 11950 / KT2440).